The following is a 313-amino-acid chain: Ribosomal RNA small subunit methyltransferase H (313 aa).

S-adenosyl-L-methionine contacts are provided by residues 35 to 37 (GGH), Asp55, Phe79, Asp100, and Gln107.

It belongs to the methyltransferase superfamily. RsmH family.

Its subcellular location is the cytoplasm. The enzyme catalyses cytidine(1402) in 16S rRNA + S-adenosyl-L-methionine = N(4)-methylcytidine(1402) in 16S rRNA + S-adenosyl-L-homocysteine + H(+). In terms of biological role, specifically methylates the N4 position of cytidine in position 1402 (C1402) of 16S rRNA. This is Ribosomal RNA small subunit methyltransferase H from Burkholderia mallei (strain NCTC 10247).